A 336-amino-acid chain; its full sequence is Serpentine receptor class alpha-10 (336 aa).

The Extracellular segment spans residues 1 to 28 (MGPITANSSKCATEDQMILQTSLLLRIN). Residues 29–49 (VIIMTIVAIITFILTYKALFI) form a helical membrane-spanning segment. The Cytoplasmic segment spans residues 50 to 61 (LKIRPIFHSSTK). Residues 62-82 (ILLYTSLLFVNVHAVIFMVIQ) traverse the membrane as a helical segment. Over 83–107 (NTALIRSFTLSDKPCEIMRTTLECR) the chain is Extracellular. The helical transmembrane segment at 108 to 128 (FQNHVLIFGIAGVNFNQFGLT) threads the bilayer. Residues 129-148 (VDRLLATIIPQSYSHMGALP) lie on the Cytoplasmic side of the membrane. The helical transmembrane segment at 149–169 (GVILSVLVVACSIAAPLIIAI) threads the bilayer. At 170 to 192 (GDPYDDIVPNCFFFPEHSAPRAN) the chain is on the extracellular side. A helical membrane pass occupies residues 193 to 213 (IFLVTLSTLVITSIFLNFIII). The Cytoplasmic portion of the chain corresponds to 214-243 (YANKKLEKGCRTRFYVTQRYQKREALISTR). A helical membrane pass occupies residues 244–264 (IISYIAASQFLGLTLYSTMVL). Over 265 to 280 (TLRLHKSMIPISIYHN) the chain is Extracellular. Residues 281–301 (MVWWAYTVPFAAVSLPALLIY) traverse the membrane as a helical segment. The Cytoplasmic segment spans residues 302–336 (RINQVGSNRKRVINRITAKVETQEEHMKSLKELWA).

It belongs to the nematode receptor-like protein sra family. As to expression, expressed in the URX sensory neuron, the ALA interneuron and in additional interneurons, pharyngeal neurons and muscle.

The protein resides in the membrane. The polypeptide is Serpentine receptor class alpha-10 (sra-10) (Caenorhabditis elegans).